The primary structure comprises 426 residues: Glutamate-1-semialdehyde 2,1-aminomutase (426 aa).

Lysine 265 carries the N6-(pyridoxal phosphate)lysine modification.

It belongs to the class-III pyridoxal-phosphate-dependent aminotransferase family. HemL subfamily. Homodimer. Pyridoxal 5'-phosphate serves as cofactor.

Its subcellular location is the cytoplasm. It catalyses the reaction (S)-4-amino-5-oxopentanoate = 5-aminolevulinate. It participates in porphyrin-containing compound metabolism; protoporphyrin-IX biosynthesis; 5-aminolevulinate from L-glutamyl-tRNA(Glu): step 2/2. The polypeptide is Glutamate-1-semialdehyde 2,1-aminomutase (Salmonella paratyphi A (strain ATCC 9150 / SARB42)).